Consider the following 245-residue polypeptide: Sugar fermentation stimulation protein homolog (245 aa).

The protein belongs to the SfsA family.

The sequence is that of Sugar fermentation stimulation protein homolog from Yersinia pseudotuberculosis serotype I (strain IP32953).